The primary structure comprises 162 residues: Disulfide bond formation protein B (162 aa).

At 1–10 the chain is on the cytoplasmic side; sequence MGDWLLRRRG. A helical transmembrane segment spans residues 11 to 27; the sequence is LALLLVLTLLLNLGALG. Over 28-45 the chain is Periplasmic; that stretch reads LEYLADMPPCPLCWVQRG. An intrachain disulfide couples cysteine 37 to cysteine 40. A helical transmembrane segment spans residues 46–62; sequence VFGLMSLVALVGLVYFP. Topologically, residues 63-68 are cytoplasmic; it reads RGWGRW. The chain crosses the membrane as a helical span at residues 69–86; that stretch reads PLAGALGLSALTGVIIAL. Residues 87–140 lie on the Periplasmic side of the membrane; sequence RHLYIQANPDAVSCGMSPEVLAQFLPWWEVLLEILSGTTDCTQVDAVLGVPLPG. Cysteines 100 and 127 form a disulfide. A helical transmembrane segment spans residues 141 to 159; the sequence is WTLVGYLALGALGLYAVLA. The Cytoplasmic portion of the chain corresponds to 160 to 162; sequence RRA.

It belongs to the DsbB family.

The protein resides in the cell inner membrane. Functionally, required for disulfide bond formation in some periplasmic proteins. Acts by oxidizing the DsbA protein. This chain is Disulfide bond formation protein B, found in Alkalilimnicola ehrlichii (strain ATCC BAA-1101 / DSM 17681 / MLHE-1).